Consider the following 610-residue polypeptide: Polyadenylation factor subunit 2 (610 aa).

The disordered stretch occupies residues 1–29 (MAFYDDSGADSQPFGRPQKPYEGGIVGPR). WD repeat units follow at residues 96–135 (KSKK…FETV), 142–182 (QLQA…ETID), 184–223 (AHHD…ADTV), 226–265 (GHNW…CLTT), 268–308 (SHKN…DICI), 311–351 (GHEK…VPSG), and 381–420 (AHSA…ETSY). 2 disordered regions span residues 480-519 (PPGG…PQMD) and 574-610 (GIPL…PYGR). The segment covering 601–610 (SNTPDNPYGR) has biased composition (polar residues).

It is found in the nucleus. Functionally, required for 3'-end cleavage and polyadenylation of pre-mRNAs. Also involved in chromosome segregation where it has a role in chromosome attachment to the mitotic spindle. This is Polyadenylation factor subunit 2 (pfs2) from Aspergillus oryzae (strain ATCC 42149 / RIB 40) (Yellow koji mold).